A 218-amino-acid chain; its full sequence is Small ribosomal subunit protein uS3 (218 aa).

The region spanning 2 to 71 (SAPQRRLPVY…IGRKGAIVKE (70 aa)) is the KH type-2 domain.

It belongs to the universal ribosomal protein uS3 family. As to quaternary structure, part of the 30S ribosomal subunit.

Its function is as follows. Binds the lower part of the 30S subunit head. The polypeptide is Small ribosomal subunit protein uS3 (Pyrobaculum aerophilum (strain ATCC 51768 / DSM 7523 / JCM 9630 / CIP 104966 / NBRC 100827 / IM2)).